Consider the following 1235-residue polypeptide: MSTGAFYISSLLEKMTSSDKDFRFMATSDLMSELQKDSIQLDEDSERKVVRTLLRLLEDRSGEVQNLAVKCLGPLVGKVKEYQVENIVDTLCANMRSDKEQLRDIAGIGLKTVLSELPPAATGSGLAINVCRKITGQLTSAIAQQEDVAVQLEALDILSDMLSRLGAPLGTFHASLLHCLLPQLSSPRLAVRKRTVVALGHLAAACSTDLFVELADHLVDRLPGPRAPASPAAIRTLIQCLGSVGRQAGHRLGAHLDRLVPMVEEFCNLDDDELRESCLQAFEAFLRKCPKEMDPHVPNVTSLCLQYMKHDPNYDHDSDDEEQMETEDSEFSEQESEDEYSDDDDMSWKVRRAAAKCMAALISSRPDLLPDFHCTLAPALIRRFKEREENVKADIFGAYIMLLRHTRPPKGWLEAVEEPTQTGRNLNMLRAQVPLVIKALQRQLKDRNVRTRQGCFNLFTELAGVLPGSLAEHMAVLVSGIVFSLADYSSSSTIRMDALAFLQGLLGTEPAEAFHPHLPTLLPPVMACVADPFYKVAAEALLVLQELVRTLWPLDRPRLLDPEPYVGEMSTATLARLRATDLDQEVKERAISCVGHLVGHLGDRLGDDLEPTLMLLLDRLRNEITRLPAVKALTLVAMSPLRLDLQPILAEALPILASFLRKNQRALRLATLAALDALAQSQGLGLPPPAVRTVLTELPALVSENDMHVAQLAVDFLTTVTQTQPSSLVEVSGPVLGELLQLLHSPLLPAGVLAATEGFLQALVGTRPPCVEYSELISLLTAPVYNQVGDGGPGLHKQVFHSLARCVAALSAACPQEAAGTASRLVCDAKSPHSSTGVKVLAFLSLAEVGQVAGPGPQRELKTVLLEALGSPSEDVRAAAAYALGRVGAGNLPDFLPFLLAQIEAQPRRQYLLLHALREALGAAQPDNLKPYVEDVWALLFQRCESPEEGTRCVVAECIGKLVFVNPPYLLPRFRKQLAAGQPYTRSTVITAVKFLISDQPHSIDPLLKSFIAEFMESLQDPDLNVRRATLTFFNSAVHNKPSLVRDLLDDILPLLYQETKIRRDLIREVEMGPFKHTVDDGLDVRKAAFECMYSLLESCLGQLDMCEFLNHVEDGLKDHYDIRMLTFIMLARLATLCPAPVLQRVDRLIEPLRATCTAKVKAGSVKQELEKQEELKRSAMRAVAALLTNPEVRKSPTVADFSAQIRSNPELTTLFESIQKDTASGPSTDSMELS.

Ser-2 is modified (N-acetylserine). 26 HEAT repeats span residues 2–39, 44–81, 83–119, 129–167, 171–208, 210–246, 254–291, 326–367, 371–408, 431–468, 516–553, 564–603, 607–644, 647–684, 689–726, 730–769, 771–812, 856–893, 895–930, 932–965, 966–1002, 1006–1043, 1047–1083, 1104–1140, 1156–1193, and 1203–1235; these read STGA…KDSI, DSER…KVKE, QVEN…ELPP, NVCR…RLGA, TFHA…ACST, LFVE…SVGR, AHLD…KCPK, TEDS…SRPD, DFHC…HTRP, AQVP…VLPG, PHLP…TLWP, PYVG…HLGD, DDLE…LRLD, PILA…SQGL, PAVR…TQPS, EVSG…TRPP, VEYS…ALSA, GPQR…GNLP, FLPF…DNLK, YVED…LVFV, NPPY…DQPH, PLLK…NKPS, DLLD…DDGL, LDMC…LCPA, TCTA…NPEV, and SAQI…MELS. The tract at residues 314–345 is disordered; the sequence is YDHDSDDEEQMETEDSEFSEQESEDEYSDDDD. A compositionally biased stretch (acidic residues) spans 317–345; it reads DSDDEEQMETEDSEFSEQESEDEYSDDDD.

This sequence belongs to the CAND family. Binds TBP, CNOT3 and UBE3C. Ubiquitinated and targeted for proteasomal degradation. Highly expressed in embryonic limb buds.

It localises to the nucleus. Probable assembly factor of SCF (SKP1-CUL1-F-box protein) E3 ubiquitin ligase complexes that promotes the exchange of the substrate-recognition F-box subunit in SCF complexes, thereby playing a key role in the cellular repertoire of SCF complexes. The protein is Cullin-associated NEDD8-dissociated protein 2 (Cand2) of Mus musculus (Mouse).